Here is a 278-residue protein sequence, read N- to C-terminus: Shikimate dehydrogenase (NADP(+)) (278 aa).

Residues 18 to 20 and threonine 65 contribute to the shikimate site; that span reads SRS. Catalysis depends on lysine 69, which acts as the Proton acceptor. Glutamate 80 lines the NADP(+) pocket. Positions 89 and 104 each coordinate shikimate. NADP(+) is bound by residues 129–133 and leucine 218; that span reads GAGGS. Tyrosine 220 lines the shikimate pocket. Glycine 241 is a binding site for NADP(+).

It belongs to the shikimate dehydrogenase family. In terms of assembly, homodimer.

It catalyses the reaction shikimate + NADP(+) = 3-dehydroshikimate + NADPH + H(+). The protein operates within metabolic intermediate biosynthesis; chorismate biosynthesis; chorismate from D-erythrose 4-phosphate and phosphoenolpyruvate: step 4/7. Involved in the biosynthesis of the chorismate, which leads to the biosynthesis of aromatic amino acids. Catalyzes the reversible NADPH linked reduction of 3-dehydroshikimate (DHSA) to yield shikimate (SA). In Rhodopseudomonas palustris (strain TIE-1), this protein is Shikimate dehydrogenase (NADP(+)).